The chain runs to 822 residues: Nose resistant to fluoxetine protein 6 (822 aa).

Residues 1-24 (MGNMRRLLIFAVLVILTVISNSKS) form the signal peptide. N-linked (GlcNAc...) asparagine glycosylation occurs at Asn236. The next 3 membrane-spanning stretches (helical) occupy residues 306-326 (LAMF…FGTL), 617-637 (PYIR…LNAW), and 655-675 (IICW…LYWF).

Belongs to the acyltransferase 3 family. In terms of tissue distribution, in L1 larvae through to adult, hyp3 and hyp5, the most anterior cells in the hypodermis, and in intestine. Other hypodermal cells show weaker expression.

The protein resides in the membrane. In terms of biological role, plays a role in the uptake of a range of molecules including lipids and xenobiotic compounds from the intestine to surrounding tissues. Mediates transport of lipids from intestine to the reproductive tract. Required for efficient yolk transport into oocytes. Vital for embryonic development. The polypeptide is Nose resistant to fluoxetine protein 6 (nrf-6) (Caenorhabditis elegans).